A 217-amino-acid chain; its full sequence is GTP cyclohydrolase 1 (217 aa).

The Zn(2+) site is built by Cys109, His112, and Cys180.

This sequence belongs to the GTP cyclohydrolase I family. Toroid-shaped homodecamer, composed of two pentamers of five dimers.

The enzyme catalyses GTP + H2O = 7,8-dihydroneopterin 3'-triphosphate + formate + H(+). It participates in cofactor biosynthesis; 7,8-dihydroneopterin triphosphate biosynthesis; 7,8-dihydroneopterin triphosphate from GTP: step 1/1. The chain is GTP cyclohydrolase 1 from Aliivibrio fischeri (strain ATCC 700601 / ES114) (Vibrio fischeri).